The following is a 312-amino-acid chain: Probable deoxyhypusine synthase (312 aa).

Catalysis depends on K285, which acts as the Nucleophile.

Belongs to the deoxyhypusine synthase family. NAD(+) serves as cofactor.

It carries out the reaction [eIF5A protein]-L-lysine + spermidine = [eIF5A protein]-deoxyhypusine + propane-1,3-diamine. Its pathway is protein modification; eIF5A hypusination. Functionally, catalyzes the NAD-dependent oxidative cleavage of spermidine and the subsequent transfer of the butylamine moiety of spermidine to the epsilon-amino group of a specific lysine residue of the eIF-5A precursor protein to form the intermediate deoxyhypusine residue. The chain is Probable deoxyhypusine synthase from Saccharolobus islandicus (strain M.16.4 / Kamchatka #3) (Sulfolobus islandicus).